Reading from the N-terminus, the 48-residue chain is FRGLAKLLKIGLKSFARVLKKILPKAAKAGKSLAKSLADENAIRQQNQ.

The protein resides in the secreted. It localises to the target cell membrane. Its function is as follows. Disrupts cell membranes, particularly those rich in phosphocholine, through formation of pores. Has antimicrobial activity, hemolytic activity and insecticidal activity. The chain is M-oxotoxin-Ot1c from Oxyopes takobius (Lynx spider).